The following is a 153-amino-acid chain: Cytochrome c-type biogenesis protein CcmE (153 aa).

Over 1-6 (MNARRR) the chain is Cytoplasmic. A helical; Signal-anchor for type II membrane protein membrane pass occupies residues 7 to 27 (LWSLLMLILAVGTAATLTIMA). Over 28–153 (LRRNLTYLYM…LDTPIAQTTP (126 aa)) the chain is Periplasmic. H121 and Y125 together coordinate heme. A compositionally biased stretch (polar residues) spans 130–141 (LTNKMQPTPTQH). The segment at 130-153 (LTNKMQPTPTQHTHLDTPIAQTTP) is disordered.

The protein belongs to the CcmE/CycJ family.

The protein resides in the cell inner membrane. In terms of biological role, heme chaperone required for the biogenesis of c-type cytochromes. Transiently binds heme delivered by CcmC and transfers the heme to apo-cytochromes in a process facilitated by CcmF and CcmH. The polypeptide is Cytochrome c-type biogenesis protein CcmE (Xylella fastidiosa (strain 9a5c)).